Reading from the N-terminus, the 340-residue chain is Dual specificity protein phosphatase 12 (340 aa).

The residue at position 1 (M1) is an N-acetylmethionine. In terms of domain architecture, Tyrosine-protein phosphatase spans 26–171; sequence QMLEVQPGLY…LKLYQAMGYE (146 aa). C115 (phosphocysteine intermediate) is an active-site residue. Residue 116–121 participates in substrate binding; the sequence is HAGVSR. S335 bears the Phosphoserine mark.

This sequence belongs to the protein-tyrosine phosphatase family. Non-receptor class dual specificity subfamily. As to quaternary structure, monomer. It depends on Zn(2+) as a cofactor. As to expression, ubiquitous, highest expression in spleen, testis, ovary, and peripheral blood leukocytes and lower expression in liver and lung.

It is found in the nucleus. The protein localises to the cytoplasm. The protein resides in the cytosol. The enzyme catalyses O-phospho-L-tyrosyl-[protein] + H2O = L-tyrosyl-[protein] + phosphate. It catalyses the reaction O-phospho-L-seryl-[protein] + H2O = L-seryl-[protein] + phosphate. It carries out the reaction O-phospho-L-threonyl-[protein] + H2O = L-threonyl-[protein] + phosphate. In terms of biological role, dual specificity phosphatase; can dephosphorylate both phosphotyrosine and phosphoserine or phosphothreonine residues. Can dephosphorylate glucokinase (in vitro). Has phosphatase activity with the synthetic substrate 6,8-difluoro-4-methylumbelliferyl phosphate and other in vitro substrates. This is Dual specificity protein phosphatase 12 (DUSP12) from Homo sapiens (Human).